Consider the following 356-residue polypeptide: 4-hydroxy-3-methylbut-2-en-1-yl diphosphate synthase (flavodoxin) (356 aa).

Positions 262, 265, 297, and 304 each coordinate [4Fe-4S] cluster.

It belongs to the IspG family. It depends on [4Fe-4S] cluster as a cofactor.

It carries out the reaction (2E)-4-hydroxy-3-methylbut-2-enyl diphosphate + oxidized [flavodoxin] + H2O + 2 H(+) = 2-C-methyl-D-erythritol 2,4-cyclic diphosphate + reduced [flavodoxin]. The protein operates within isoprenoid biosynthesis; isopentenyl diphosphate biosynthesis via DXP pathway; isopentenyl diphosphate from 1-deoxy-D-xylulose 5-phosphate: step 5/6. Converts 2C-methyl-D-erythritol 2,4-cyclodiphosphate (ME-2,4cPP) into 1-hydroxy-2-methyl-2-(E)-butenyl 4-diphosphate. This is 4-hydroxy-3-methylbut-2-en-1-yl diphosphate synthase (flavodoxin) from Campylobacter fetus subsp. fetus (strain 82-40).